We begin with the raw amino-acid sequence, 435 residues long: Enolase (435 aa).

A (2R)-2-phosphoglycerate-binding site is contributed by Gln163. The Proton donor role is filled by Glu205. Residues Asp243, Glu292, and Asp319 each coordinate Mg(2+). The (2R)-2-phosphoglycerate site is built by Lys344, Arg373, Ser374, and Lys395. Lys344 (proton acceptor) is an active-site residue.

This sequence belongs to the enolase family. Mg(2+) serves as cofactor.

The protein localises to the cytoplasm. Its subcellular location is the secreted. It localises to the cell surface. The catalysed reaction is (2R)-2-phosphoglycerate = phosphoenolpyruvate + H2O. It functions in the pathway carbohydrate degradation; glycolysis; pyruvate from D-glyceraldehyde 3-phosphate: step 4/5. In terms of biological role, catalyzes the reversible conversion of 2-phosphoglycerate (2-PG) into phosphoenolpyruvate (PEP). It is essential for the degradation of carbohydrates via glycolysis. This chain is Enolase, found in Streptococcus suis (strain 98HAH33).